A 53-amino-acid chain; its full sequence is UPF0391 membrane protein YtjA (53 aa).

2 helical membrane-spanning segments follow: residues W4–A24 and A30–M48.

The protein belongs to the UPF0391 family.

The protein resides in the cell membrane. This Salmonella agona (strain SL483) protein is UPF0391 membrane protein YtjA.